The chain runs to 111 residues: Ig kappa chain V-III region PC 2485/PC 4039 (111 aa).

Positions 1–23 are framework-1; the sequence is DIVLTQSPASLAVSLGQRATISC. Cysteines 23 and 92 form a disulfide. The complementarity-determining-1 stretch occupies residues 24–38; it reads RASKSVSTSGYSYMH. Residues 39–53 form a framework-2 region; sequence WYQQKPGQPPKLLIY. A complementarity-determining-2 region spans residues 54 to 60; sequence LASSLES. The tract at residues 61 to 92 is framework-3; the sequence is GVPARFSGSGSGTDFTLNIQPVEEEDAAIYYC. Residues 93–101 are complementarity-determining-3; it reads QHSRELPLT. Residues 102–111 are framework-4; sequence FGAGTKLELK.

The sequence is that of Ig kappa chain V-III region PC 2485/PC 4039 from Mus musculus (Mouse).